The chain runs to 218 residues: MRNSNTPIAAEGYPFIAGAVLIAVVLAVLGSKIPAFFFLAVFFGALTLFIVFFFRNPERTTPADENAVIAPADGVVIYLGPSREEHLGEEMTKISIFMSVFNVHVNRVPITGKVLDTFYIKGKFLDVRDDRATFENEQAGLIIETAKGMKMIVVQVAGLIARRIVCYAAKGDQLVRGKRYGLIRFGSRLDVYLPSETAVRVRMGDKTVAGETILGLLP.

Ser187 serves as the catalytic Schiff-base intermediate with substrate; via pyruvic acid. Ser187 bears the Pyruvic acid (Ser); by autocatalysis mark.

The protein belongs to the phosphatidylserine decarboxylase family. PSD-A subfamily. In terms of assembly, heterodimer of a large membrane-associated beta subunit and a small pyruvoyl-containing alpha subunit. Pyruvate serves as cofactor. Post-translationally, is synthesized initially as an inactive proenzyme. Formation of the active enzyme involves a self-maturation process in which the active site pyruvoyl group is generated from an internal serine residue via an autocatalytic post-translational modification. Two non-identical subunits are generated from the proenzyme in this reaction, and the pyruvate is formed at the N-terminus of the alpha chain, which is derived from the carboxyl end of the proenzyme. The post-translation cleavage follows an unusual pathway, termed non-hydrolytic serinolysis, in which the side chain hydroxyl group of the serine supplies its oxygen atom to form the C-terminus of the beta chain, while the remainder of the serine residue undergoes an oxidative deamination to produce ammonia and the pyruvoyl prosthetic group on the alpha chain.

Its subcellular location is the cell membrane. It carries out the reaction a 1,2-diacyl-sn-glycero-3-phospho-L-serine + H(+) = a 1,2-diacyl-sn-glycero-3-phosphoethanolamine + CO2. It functions in the pathway phospholipid metabolism; phosphatidylethanolamine biosynthesis; phosphatidylethanolamine from CDP-diacylglycerol: step 2/2. Functionally, catalyzes the formation of phosphatidylethanolamine (PtdEtn) from phosphatidylserine (PtdSer). The protein is Phosphatidylserine decarboxylase proenzyme of Geobacter metallireducens (strain ATCC 53774 / DSM 7210 / GS-15).